The primary structure comprises 585 residues: Mitochondrial sodium/calcium exchanger protein (585 aa).

The N-terminal stretch at 1–26 (MAGRWLDPLWAPGFLCVALILETASG) is a signal peptide. Residues 27 to 95 (AGDLSTKAHG…GIFCYFPPNL (69 aa)) are Extracellular-facing. N-linked (GlcNAc...) asparagine glycosylation occurs at N46. The helical transmembrane segment at 96 to 116 (LPLAITLYVFWLLYLFLILGV) threads the bilayer. At 117–140 (TAAKFFCPNLSAISTSLKLSHNVA) the chain is on the cytoplasmic side. A helical membrane pass occupies residues 141–161 (GVTFLAFGNGAPDIFSALVAF). Topologically, residues 162–168 (SDPRTAG) are extracellular. The helical transmembrane segment at 169 to 189 (LAIGALFGAGVLVTTVVAGGI) threads the bilayer. Topologically, residues 190-205 (TILRPFMAASRPFLRD) are cytoplasmic. Residues 206 to 226 (ITFYMVAVFLTFTALYLGRIT) traverse the membrane as a helical segment. Position 227 (L227) is a topological domain, extracellular. The helical transmembrane segment at 228–247 (VWALGYLGLYVFYVVTVIIC) threads the bilayer. The Cytoplasmic segment spans residues 248–325 (TWVYQRQRSR…KWRTQSISCK (78 aa)). At S258 the chain carries Phosphoserine; by PKA. Residues 326 to 346 (LLKVAKLPVEFLLLLTVPVVD) traverse the membrane as a helical segment. Residues 347–360 (PDKDDRNWKRPLNC) lie on the Extracellular side of the membrane. A helical transmembrane segment spans residues 361 to 381 (LQLVISPLVLVLTLQSGVYGI). Residues 382–383 (YE) are Cytoplasmic-facing. Residues 384-404 (IGGLLPVWAVVVIVGTALASV) traverse the membrane as a helical segment. The Extracellular segment spans residues 405 to 416 (TFFATSNSEPPR). A helical membrane pass occupies residues 417–437 (LHWLFAFLGFLTSALWINAAA). Topologically, residues 438–445 (TEVVNILR) are cytoplasmic. Residues 446 to 466 (SLGVVFRLSNTVLGLTLLAWG) traverse the membrane as a helical segment. Topologically, residues 467–491 (NSIGDAFSDFTLARQGYPRMAFSAC) are extracellular. A helical transmembrane segment spans residues 492-512 (FGGIIFNILVGVGLGCLLQIV). Residues 513-525 (RSHASEVKLEPDG) lie on the Cytoplasmic side of the membrane. Residues 526–546 (LLVWVLASALGLSLVFSLVSV) form a helical membrane-spanning segment. Residues 547 to 559 (PLQCFQLSKAYGL) are Extracellular-facing. A helical membrane pass occupies residues 560–580 (CLLLFYICFIVVVLLTEFGVI). Residues 581 to 585 (HLKAD) lie on the Cytoplasmic side of the membrane.

This sequence belongs to the Ca(2+):cation antiporter (CaCA) (TC 2.A.19) family. SLC24A subfamily. Post-translationally, phosphorylation at Ser-258 by PKA prevents calcium overload. Widely expressed. Present at higher level in pancreas, stomach, skeletal muscle and skin (at protein level). Ubiquitously expressed.

It is found in the mitochondrion inner membrane. It catalyses the reaction Ca(2+)(in) + 3 Na(+)(out) = Ca(2+)(out) + 3 Na(+)(in). The enzyme catalyses 3 Li(+)(out) + Ca(2+)(in) = 3 Li(+)(in) + Ca(2+)(out). Its activity is regulated as follows. Inhibited by the sodium/calcium exchanger inhibitor CGP-37157. Strongly inhibited by zinc. Functionally, mitochondrial sodium/calcium antiporter that mediates sodium-dependent calcium efflux from mitochondrion, by mediating the exchange of 3 sodium ions per 1 calcium ion. Plays a central role in mitochondrial calcium homeostasis by mediating mitochondrial calcium extrusion: calcium efflux is essential for mitochondrial function and cell survival, notably in cardiomyocytes. Regulates rates of glucose-dependent insulin secretion in pancreatic beta-cells during the first phase of insulin secretion: acts by mediating efflux of calcium from mitochondrion, thereby affecting cytoplasmic calcium responses. Required for store-operated Ca(2+) entry (SOCE) and Ca(2+) release-activated Ca(2+) (CRAC) channel regulation: sodium transport by SLC8B1 leads to promote calcium-shuttling that modulates mitochondrial redox status, thereby regulating SOCE activity. Involved in B-lymphocyte chemotaxis. Able to transport Ca(2+) in exchange of either Li(+) or Na(+), explaining how Li(+) catalyzes Ca(2+) exchange. In contrast to other members of the family its function is independent of K(+). The chain is Mitochondrial sodium/calcium exchanger protein from Rattus norvegicus (Rat).